We begin with the raw amino-acid sequence, 439 residues long: Histone acetyltransferase GCN5 (439 aa).

Composition is skewed to basic and acidic residues over residues 1–28 (MVTK…KLEN) and 39–59 (ETNK…KETE). The tract at residues 1 to 59 (MVTKHQIEEDHLDGATTDPEVKRVKLENNVEEIQPEQAETNKQEGTDKENKGKFEKETE) is disordered. The region spanning 100 to 255 (IEFRVVNNDN…GGTLMQCSML (156 aa)) is the N-acetyltransferase domain. Glu173 serves as the catalytic Proton donor/acceptor. Residues 177 to 179 (CAI), 184 to 190 (QVRGYGA), and 216 to 219 (YAIG) each bind acetyl-CoA. One can recognise a Bromo domain in the interval 327 to 431 (PKRGPHDAAI…KFFNNKVKEI (105 aa)).

Belongs to the acetyltransferase family. GCN5 subfamily. Component of the 1.8 MDa SAGA (Spt-Ada-Gcn5 acetyltransferase) complex, which is composed of 19 subunits TRA1, SPT7, TAF5, NGG1/ADA3, SGF73, SPT20/ADA5, SPT8, TAF12, TAF6, HFI1/ADA1, UBP8, GCN5, ADA2, SPT3, SGF29, TAF10, TAF9, SGF11 and SUS1. The SAGA complex is composed of 4 modules, namely the HAT (histone acetyltransferase) module (GCN5, ADA2, NGG1/ADA3 and SGF29), the DUB (deubiquitinating) module (UBP8, SGF11, SGF73 and SUS1), the core or TAF (TBP-associated factor) module (TAF5, TAF6, TAF9, TAF10 and TAF12), and the Tra1 or SPT (Suppressor of Ty) module (TRA1, HFI1/ADA1, SPT3, SPT7, SPT8 and SPT20/ADA5). The Tra1/SPT module binds activators, the core module recruits TBP (TATA-binding protein), the HAT module contains the histone H3 acetyltransferase GCN5, and the DUB module comprises the histone H2B deubiquitinase UBP8. Also identified in an altered form of SAGA, named SALSA (SAGA altered, Spt8 absent) or SLIK (SAGA-like) complex, which contains a C-terminal truncated form of SPT7 and is missing SPT8. However, it has been shown that the SAGA and SAGA-like SALSA/SLIK transcriptional coactivators are structurally and biochemically equivalent. Component of the 0.8 MDa ADA complex, a HAT complex distinct from SAGA, which at least consists of ADA2, NGG1/ADA3, AHC1, AHC2, SGF29 and GCN5. Component of an ADA/GCN5 complex that consists of HFI1/ADA1, ADA2, NGG1/ADA3, SPT20/ADA5 and GCN5 and probably is a subcomplex of SAGA.

It localises to the nucleus. It is found in the cytoplasm. It carries out the reaction L-lysyl-[protein] + acetyl-CoA = N(6)-acetyl-L-lysyl-[protein] + CoA + H(+). It catalyses the reaction (2E)-butenoyl-CoA + L-lysyl-[protein] = N(6)-(2E)-butenoyl-L-lysyl-[protein] + CoA + H(+). In terms of biological role, histone acetyltransferase that acetylates histone H2B to form H2BK11ac and H2BK16ac, histone H3 to form H3K9ac, H3K14ac, H3K18ac, H3K23ac, H3K27ac and H3K36ac, with a lower preference histone H4 to form H4K8ac and H4K16ac, and contributes to H2A.Z acetylation. Acetylation of histones gives a specific tag for epigenetic transcription activation and elongation. Operates in concert with certain DNA-binding transcriptional activators such as GCN4 or HAP2/3/4. Its acetyltransferase activity seems to be dependent on the association in different multisubunit complexes. Component of the transcription coactivator SAGA complex. SAGA acts as a general cofactor required for essentially all RNA polymerase II transcription. At the promoters, SAGA is required for transcription pre-initiation complex (PIC) recruitment. It influences RNA polymerase II transcriptional activity through different activities such as TBP interaction (via core/TAF module) and promoter selectivity, interaction with transcription activators (via Tra1/SPT module), and chromatin modification through histone acetylation (via HAT module) and deubiquitination (via DUB module). SAGA preferentially acetylates histones H3 (to form H3K9ac, H3K14ac, H3K18ac and H3K23ac) and H2B and deubiquitinates histone H2B. SAGA interacts with DNA via upstream activating sequences (UASs). Also identified in a modified version of SAGA named SALSA or SLIK. The cleavage of SPT7 and the absence of the SPT8 subunit in SLIK neither drive any major conformational differences in its structure compared with SAGA, nor significantly affect HAT, DUB, or DNA-binding activities. Component of the ADA histone acetyltransferase complex, which preferentially acetylates nucleosomal histones H3 (to form H3K14ac and H3K18ac) and H2B. In addition to histone acetyltransferase, can use different acyl-CoA substrates, such as (2E)-butenoyl-CoA (crotonyl-CoA) and is able to mediate histone crotonylation. Controls the metaphase-to-anaphase transition and is required for correct chromosome segregation and centromere/kinetochore function in mitosis. May be involved in response to DNA damage by genotoxic agents. The polypeptide is Histone acetyltransferase GCN5 (Saccharomyces cerevisiae (strain ATCC 204508 / S288c) (Baker's yeast)).